Reading from the N-terminus, the 290-residue chain is Glutamate racemase (290 aa).

Residues 24 to 25 and 56 to 57 each bind substrate; these read DS and YG. Cys87 (proton donor/acceptor) is an active-site residue. Substrate is bound at residue 88 to 89; the sequence is NT. Residue Cys199 is the Proton donor/acceptor of the active site. 200–201 lines the substrate pocket; that stretch reads TH. Positions 271–290 are disordered; it reads GADGASLPDPPSPRIELTTT.

It belongs to the aspartate/glutamate racemases family.

The catalysed reaction is L-glutamate = D-glutamate. Its pathway is cell wall biogenesis; peptidoglycan biosynthesis. Functionally, provides the (R)-glutamate required for cell wall biosynthesis. The protein is Glutamate racemase of Deinococcus radiodurans (strain ATCC 13939 / DSM 20539 / JCM 16871 / CCUG 27074 / LMG 4051 / NBRC 15346 / NCIMB 9279 / VKM B-1422 / R1).